A 356-amino-acid polypeptide reads, in one-letter code: Histidinol-phosphate aminotransferase (356 aa).

Lysine 214 carries the post-translational modification N6-(pyridoxal phosphate)lysine.

Belongs to the class-II pyridoxal-phosphate-dependent aminotransferase family. Histidinol-phosphate aminotransferase subfamily. In terms of assembly, homodimer. Pyridoxal 5'-phosphate is required as a cofactor.

It carries out the reaction L-histidinol phosphate + 2-oxoglutarate = 3-(imidazol-4-yl)-2-oxopropyl phosphate + L-glutamate. Its pathway is amino-acid biosynthesis; L-histidine biosynthesis; L-histidine from 5-phospho-alpha-D-ribose 1-diphosphate: step 7/9. The protein is Histidinol-phosphate aminotransferase of Shigella boydii serotype 4 (strain Sb227).